A 251-amino-acid polypeptide reads, in one-letter code: Phosphate import ATP-binding protein PstB 2 (251 aa).

Positions 6 to 246 (FNIENLDLFY…PRDDRTRGYV (241 aa)) constitute an ABC transporter domain. Residue 38-45 (GPSGCGKS) coordinates ATP.

It belongs to the ABC transporter superfamily. Phosphate importer (TC 3.A.1.7) family. The complex is composed of two ATP-binding proteins (PstB), two transmembrane proteins (PstC and PstA) and a solute-binding protein (PstS).

It localises to the cell inner membrane. The enzyme catalyses phosphate(out) + ATP + H2O = ADP + 2 phosphate(in) + H(+). In terms of biological role, part of the ABC transporter complex PstSACB involved in phosphate import. Responsible for energy coupling to the transport system. This Vibrio cholerae serotype O1 (strain ATCC 39315 / El Tor Inaba N16961) protein is Phosphate import ATP-binding protein PstB 2.